Here is a 306-residue protein sequence, read N- to C-terminus: UDP-3-O-acyl-N-acetylglucosamine deacetylase (306 aa).

Residues H79, H238, and D242 each contribute to the Zn(2+) site. The active-site Proton donor is the H265.

The protein belongs to the LpxC family. Requires Zn(2+) as cofactor.

The catalysed reaction is a UDP-3-O-[(3R)-3-hydroxyacyl]-N-acetyl-alpha-D-glucosamine + H2O = a UDP-3-O-[(3R)-3-hydroxyacyl]-alpha-D-glucosamine + acetate. It functions in the pathway glycolipid biosynthesis; lipid IV(A) biosynthesis; lipid IV(A) from (3R)-3-hydroxytetradecanoyl-[acyl-carrier-protein] and UDP-N-acetyl-alpha-D-glucosamine: step 2/6. In terms of biological role, catalyzes the hydrolysis of UDP-3-O-myristoyl-N-acetylglucosamine to form UDP-3-O-myristoylglucosamine and acetate, the committed step in lipid A biosynthesis. The protein is UDP-3-O-acyl-N-acetylglucosamine deacetylase of Shewanella denitrificans (strain OS217 / ATCC BAA-1090 / DSM 15013).